Consider the following 343-residue polypeptide: Fructose-1,6-bisphosphatase class 1 (343 aa).

Residues E99, D121, L123, and D124 each contribute to the Mg(2+) site. Residues 124–127, N218, Y250, and K283 each bind substrate; that span reads DGSS. E289 contacts Mg(2+).

This sequence belongs to the FBPase class 1 family. Homotetramer. Requires Mg(2+) as cofactor.

It is found in the cytoplasm. The enzyme catalyses beta-D-fructose 1,6-bisphosphate + H2O = beta-D-fructose 6-phosphate + phosphate. It participates in carbohydrate biosynthesis; gluconeogenesis. This Leptospira biflexa serovar Patoc (strain Patoc 1 / Ames) protein is Fructose-1,6-bisphosphatase class 1.